A 105-amino-acid chain; its full sequence is MNDRPRPCSNPAMLKHNTYFEGGVQSVGFERNGRRHTVGVVDAGEFHFATDAAERMTVVSGELWAKLPGEAAFRPFASGTVFEVPAKSGFEVKALAPAAYLCEFL.

Belongs to the nucleoside phosphorylase PpnP family.

It carries out the reaction a purine D-ribonucleoside + phosphate = a purine nucleobase + alpha-D-ribose 1-phosphate. The enzyme catalyses adenosine + phosphate = alpha-D-ribose 1-phosphate + adenine. The catalysed reaction is cytidine + phosphate = cytosine + alpha-D-ribose 1-phosphate. It catalyses the reaction guanosine + phosphate = alpha-D-ribose 1-phosphate + guanine. It carries out the reaction inosine + phosphate = alpha-D-ribose 1-phosphate + hypoxanthine. The enzyme catalyses thymidine + phosphate = 2-deoxy-alpha-D-ribose 1-phosphate + thymine. The catalysed reaction is uridine + phosphate = alpha-D-ribose 1-phosphate + uracil. It catalyses the reaction xanthosine + phosphate = alpha-D-ribose 1-phosphate + xanthine. Catalyzes the phosphorolysis of diverse nucleosides, yielding D-ribose 1-phosphate and the respective free bases. Can use uridine, adenosine, guanosine, cytidine, thymidine, inosine and xanthosine as substrates. Also catalyzes the reverse reactions. In Anaeromyxobacter sp. (strain Fw109-5), this protein is Pyrimidine/purine nucleoside phosphorylase.